We begin with the raw amino-acid sequence, 288 residues long: Acetyl-coenzyme A carboxylase carboxyl transferase subunit beta (288 aa).

The CoA carboxyltransferase N-terminal domain occupies 34–288 (LFAKCPGCKQ…TLLSFHGGVQ (255 aa)). The Zn(2+) site is built by C38, C41, C56, and C59. Residues 38-59 (CPGCKQAIYQKDLGQAKICPNC) form a C4-type zinc finger.

The protein belongs to the AccD/PCCB family. As to quaternary structure, acetyl-CoA carboxylase is a heterohexamer composed of biotin carboxyl carrier protein (AccB), biotin carboxylase (AccC) and two subunits each of ACCase subunit alpha (AccA) and ACCase subunit beta (AccD). Requires Zn(2+) as cofactor.

The protein localises to the cytoplasm. It carries out the reaction N(6)-carboxybiotinyl-L-lysyl-[protein] + acetyl-CoA = N(6)-biotinyl-L-lysyl-[protein] + malonyl-CoA. The protein operates within lipid metabolism; malonyl-CoA biosynthesis; malonyl-CoA from acetyl-CoA: step 1/1. Functionally, component of the acetyl coenzyme A carboxylase (ACC) complex. Biotin carboxylase (BC) catalyzes the carboxylation of biotin on its carrier protein (BCCP) and then the CO(2) group is transferred by the transcarboxylase to acetyl-CoA to form malonyl-CoA. This chain is Acetyl-coenzyme A carboxylase carboxyl transferase subunit beta, found in Streptococcus thermophilus (strain CNRZ 1066).